A 375-amino-acid polypeptide reads, in one-letter code: MQKLQISVYIYLFMLIVAGPVDLNENSEQKENVEKEGLCNACLWRENTTSSRLEAIKIQILSKLRLETAPNISKDAIRQLLPKAPPLLELIDQFDVQRDAGSDGSLEDDDYHARTDAVITMPTESDLLTQVEGKPKCCFFQFSSKIQYNKLVKAQLWIYLRPVKTPATVFVQILRLIKPMKDGTRYTGIRSLKLDMNPGTGIWQSIDVKTVLQNWLKQPESNLGIEIKALDENGHDLAVTFPEPGEDGLTPFLEVKVTDTPKRSRRDFGLDCDERSTESRCCRYPLTVDFEAFGWDWIIAPKRYKANYCSGECEFVFLQKYPHTHLVHQANPRGSAGPCCTPTKMSPINMLYFNGEGQIIYGKIPAMVVDRCGCS.

The N-terminal stretch at 1 to 18 is a signal peptide; that stretch reads MQKLQISVYIYLFMLIVA. Residues 19 to 266 constitute a propeptide that is removed on maturation; that stretch reads GPVDLNENSE…VTDTPKRSRR (248 aa). Asn47 and Asn71 each carry an N-linked (GlcNAc...) asparagine glycan. Cystine bridges form between Cys272–Cys282, Cys281–Cys340, Cys309–Cys372, and Cys313–Cys374.

Belongs to the TGF-beta family. Homodimer; disulfide-linked. Interacts with WFIKKN2, leading to inhibit its activity. Interacts with FSTL3. In terms of processing, synthesized as large precursor molecule that undergoes proteolytic cleavage to generate an N-terminal propeptide and a disulfide linked C-terminal dimer, which is the biologically active molecule. The circulating form consists of a latent complex of the C-terminal dimer and other proteins, including its propeptide, which maintain the C-terminal dimer in a latent, inactive state. Ligand activation requires additional cleavage of the prodomain by a tolloid-like metalloproteinase.

The protein resides in the secreted. Acts specifically as a negative regulator of skeletal muscle growth. The polypeptide is Growth/differentiation factor 8 (MSTN) (Bubalus bubalis (Domestic water buffalo)).